The sequence spans 401 residues: F-box protein At1g69090 (401 aa).

A disordered region spans residues 1 to 23 (MASPTLALAQSPPPKSPAVSVSQ). Positions 27 to 74 (HCWSKLPLDLMQLVFERLAFLDFERAKSVCSSWQFGSKQSKPNNQIPW) constitute an F-box domain.

The polypeptide is F-box protein At1g69090 (Arabidopsis thaliana (Mouse-ear cress)).